The chain runs to 279 residues: Putative pyruvate, phosphate dikinase regulatory protein (279 aa).

Position 152–159 (G152–S159) interacts with ADP.

It belongs to the pyruvate, phosphate/water dikinase regulatory protein family. PDRP subfamily.

The catalysed reaction is N(tele)-phospho-L-histidyl/L-threonyl-[pyruvate, phosphate dikinase] + ADP = N(tele)-phospho-L-histidyl/O-phospho-L-threonyl-[pyruvate, phosphate dikinase] + AMP + H(+). The enzyme catalyses N(tele)-phospho-L-histidyl/O-phospho-L-threonyl-[pyruvate, phosphate dikinase] + phosphate + H(+) = N(tele)-phospho-L-histidyl/L-threonyl-[pyruvate, phosphate dikinase] + diphosphate. Its function is as follows. Bifunctional serine/threonine kinase and phosphorylase involved in the regulation of the pyruvate, phosphate dikinase (PPDK) by catalyzing its phosphorylation/dephosphorylation. The sequence is that of Putative pyruvate, phosphate dikinase regulatory protein from Anaplasma marginale (strain Florida).